A 254-amino-acid chain; its full sequence is Alcohol dehydrogenase (254 aa).

9–32 contacts NAD(+); it reads IFVAGLGGIGLDTSRELVKRDLKN. Residue Ser-138 coordinates substrate. Tyr-151 serves as the catalytic Proton acceptor.

The protein belongs to the short-chain dehydrogenases/reductases (SDR) family. As to quaternary structure, homodimer.

It catalyses the reaction a primary alcohol + NAD(+) = an aldehyde + NADH + H(+). The catalysed reaction is a secondary alcohol + NAD(+) = a ketone + NADH + H(+). The polypeptide is Alcohol dehydrogenase (Adh) (Drosophila paulistorum (Fruit fly)).